Here is a 739-residue protein sequence, read N- to C-terminus: NAD(P)H-quinone oxidoreductase subunit 5, chloroplastic (739 aa).

15 helical membrane passes run 9-29 (WVIP…LLLV), 40-60 (WAFP…NLSI), 89-109 (IDPL…VVLI), 144-164 (LIQI…LIGF), 184-204 (IGDF…GSFE), 219-239 (NGVH…GAVA), 258-278 (TPIS…FLVA), 280-300 (LLPI…IGVI), 327-347 (LGYT…FHLI), 354-374 (ALLF…VGYS), 396-416 (TTFL…CFWS), 425-445 (WLYS…TAFY), 542-562 (TMLF…SIGI), 597-617 (FFIN…IAFL), and 719-739 (LFLY…WSLI).

It belongs to the complex I subunit 5 family. In terms of assembly, NDH is composed of at least 16 different subunits, 5 of which are encoded in the nucleus.

It is found in the plastid. It localises to the chloroplast thylakoid membrane. It carries out the reaction a plastoquinone + NADH + (n+1) H(+)(in) = a plastoquinol + NAD(+) + n H(+)(out). It catalyses the reaction a plastoquinone + NADPH + (n+1) H(+)(in) = a plastoquinol + NADP(+) + n H(+)(out). NDH shuttles electrons from NAD(P)H:plastoquinone, via FMN and iron-sulfur (Fe-S) centers, to quinones in the photosynthetic chain and possibly in a chloroplast respiratory chain. The immediate electron acceptor for the enzyme in this species is believed to be plastoquinone. Couples the redox reaction to proton translocation, and thus conserves the redox energy in a proton gradient. The chain is NAD(P)H-quinone oxidoreductase subunit 5, chloroplastic (ndhF) from Chloranthus spicatus (Chulantree).